A 119-amino-acid chain; its full sequence is MCGEPGCRHEQTAVKAGRSRNWAGSFAKTPGRLFGVGFIRLYQLTLSGFVGNSCRHIPTCSEYGYEAIARHGLWAGGWMALFRVARCGPGGTSGLDPVPEELDGSKRWWTPWRYWSRHR.

It belongs to the UPF0161 family.

The protein resides in the cell inner membrane. Functionally, could be involved in insertion of integral membrane proteins into the membrane. The protein is Putative membrane protein insertion efficiency factor of Agrobacterium fabrum (strain C58 / ATCC 33970) (Agrobacterium tumefaciens (strain C58)).